Here is a 513-residue protein sequence, read N- to C-terminus: 2-isopropylmalate synthase (513 aa).

The Pyruvate carboxyltransferase domain occupies 5–268 (LIIFDTTLRD…EVGIDTTQIV (264 aa)). Residues D14, H202, H204, and N239 each coordinate Mn(2+). The interval 394 to 513 (RLLSLEQQSA…SKNERVAAQG (120 aa)) is regulatory domain.

The protein belongs to the alpha-IPM synthase/homocitrate synthase family. LeuA type 1 subfamily. As to quaternary structure, homodimer. Mn(2+) is required as a cofactor.

It is found in the cytoplasm. It catalyses the reaction 3-methyl-2-oxobutanoate + acetyl-CoA + H2O = (2S)-2-isopropylmalate + CoA + H(+). It functions in the pathway amino-acid biosynthesis; L-leucine biosynthesis; L-leucine from 3-methyl-2-oxobutanoate: step 1/4. Catalyzes the condensation of the acetyl group of acetyl-CoA with 3-methyl-2-oxobutanoate (2-ketoisovalerate) to form 3-carboxy-3-hydroxy-4-methylpentanoate (2-isopropylmalate). The sequence is that of 2-isopropylmalate synthase from Methylibium petroleiphilum (strain ATCC BAA-1232 / LMG 22953 / PM1).